The chain runs to 445 residues: tRNA-2-methylthio-N(6)-dimethylallyladenosine synthase (445 aa).

The MTTase N-terminal domain maps to 4–121 (NKIYIKTWGC…LPNMIQEVKK (118 aa)). 6 residues coordinate [4Fe-4S] cluster: Cys13, Cys50, Cys84, Cys158, Cys162, and Cys165. Residues 144 to 376 (RKPKVTAFVS…QTLIRNNTTM (233 aa)) enclose the Radical SAM core domain. The region spanning 379–442 (QKMLGSIQSV…PNSLRGSYEK (64 aa)) is the TRAM domain.

The protein belongs to the methylthiotransferase family. MiaB subfamily. As to quaternary structure, monomer. Requires [4Fe-4S] cluster as cofactor.

It localises to the cytoplasm. It catalyses the reaction N(6)-dimethylallyladenosine(37) in tRNA + (sulfur carrier)-SH + AH2 + 2 S-adenosyl-L-methionine = 2-methylsulfanyl-N(6)-dimethylallyladenosine(37) in tRNA + (sulfur carrier)-H + 5'-deoxyadenosine + L-methionine + A + S-adenosyl-L-homocysteine + 2 H(+). Catalyzes the methylthiolation of N6-(dimethylallyl)adenosine (i(6)A), leading to the formation of 2-methylthio-N6-(dimethylallyl)adenosine (ms(2)i(6)A) at position 37 in tRNAs that read codons beginning with uridine. The protein is tRNA-2-methylthio-N(6)-dimethylallyladenosine synthase of Buchnera aphidicola subsp. Baizongia pistaciae (strain Bp).